The chain runs to 203 residues: Urease accessory protein UreG (203 aa).

14–21 provides a ligand contact to GTP; the sequence is GPVGSGKT.

The protein belongs to the SIMIBI class G3E GTPase family. UreG subfamily. In terms of assembly, homodimer. UreD, UreF and UreG form a complex that acts as a GTP-hydrolysis-dependent molecular chaperone, activating the urease apoprotein by helping to assemble the nickel containing metallocenter of UreC. The UreE protein probably delivers the nickel.

Its subcellular location is the cytoplasm. Facilitates the functional incorporation of the urease nickel metallocenter. This process requires GTP hydrolysis, probably effectuated by UreG. This is Urease accessory protein UreG from Rhizobium leguminosarum bv. trifolii (strain WSM2304).